Here is a 107-residue protein sequence, read N- to C-terminus: MDKVNNNCCCGENAKPCCTDPNSGCCCVSETNNCCKSDKKECCTGTGEGCKWTGCKCCQPAKSGCCCGDKAKACCTDPNSGCCCSSKTNKCCDSTNKTECKTCECCK.

This sequence belongs to the metallothionein superfamily. Type 7 family.

In terms of biological role, the metallothioneins are involved in the cellular sequestration of toxic metal ions. Binds 12 cadmium ions per molecule. This chain is Metallothionein-1, found in Tetrahymena thermophila.